The chain runs to 730 residues: Elongation factor 2 (730 aa).

The region spanning 19-260 is the tr-type G domain; sequence DRIRNIGIVA…MVVKHLPNPL (242 aa). Residues 28-35, 94-98, and 148-151 each bind GTP; these read AHIDHGKT, DTPGH, and NKVD. A Diphthamide modification is found at H597.

It belongs to the TRAFAC class translation factor GTPase superfamily. Classic translation factor GTPase family. EF-G/EF-2 subfamily.

It localises to the cytoplasm. Catalyzes the GTP-dependent ribosomal translocation step during translation elongation. During this step, the ribosome changes from the pre-translocational (PRE) to the post-translocational (POST) state as the newly formed A-site-bound peptidyl-tRNA and P-site-bound deacylated tRNA move to the P and E sites, respectively. Catalyzes the coordinated movement of the two tRNA molecules, the mRNA and conformational changes in the ribosome. The chain is Elongation factor 2 from Methanoculleus marisnigri (strain ATCC 35101 / DSM 1498 / JR1).